Consider the following 514-residue polypeptide: Cytochrome P450 71AP13 (514 aa).

Residues 20 to 37 (HSSLFAFSLLILLLKFIY) traverse the membrane as a helical segment. N-linked (GlcNAc...) asparagine glycosylation is found at N127 and N184. C455 is a heme binding site.

The protein belongs to the cytochrome P450 family. Heme is required as a cofactor. In terms of tissue distribution, expressed in fruit kernel, seedlings, leaves and stems.

The protein resides in the membrane. The polypeptide is Cytochrome P450 71AP13 (Prunus mume (Japanese apricot)).